Here is a 4059-residue protein sequence, read N- to C-terminus: Fibrocystin (4059 aa).

Positions 1–18 are cleaved as a signal peptide; it reads MMLAWLVSLLSMEVLLLA. At 19–3851 the chain is on the extracellular side; sequence KPYSSFQFEP…LPVASKERST (3833 aa). In terms of domain architecture, IPT/TIG 1; atypical spans 25-109; it reads QFEPAEGSLA…AGPYSLEMRS (85 aa). N55 and N224 each carry an N-linked (GlcNAc...) asparagine glycan. IPT/TIG domains are found at residues 135–230 and 257–333; these read PVLY…FSVF and PEIL…FEVG. The region spanning 323 to 483 is the PA14 domain; that stretch reads AGNRGLRFEV…TWLNPDVVNT (161 aa). N-linked (GlcNAc...) asparagine glycans are attached at residues N355, N385, N518, N527, N620, N639, N709, N867, N965, N975, N1082, N1114, N1133, N1239, N1273, N1308, N1319, N1344, N1373, N1456, N1471, N1528, N1613, N1627, N1694, N1760, N1775, N1875, N1879, N1915, N1955, N2030, and N2139. IPT/TIG domains lie at 945-997 and 1017-1100; these read LVHF…FMLV and PRLD…AFTY. Residues 1106–1190 enclose the IPT/TIG 6; atypical domain; that stretch reads PVIVSLSRNR…IRSQGVDLYI (85 aa). An IPT/TIG 7 domain is found at 1198–1266; that stretch reads SVEPCSGSLL…RADVLTVLAS (69 aa). Residues 1297–1378 form the IPT/TIG 8; atypical domain; sequence PVVTAMWGEF…MGFANMSVVP (82 aa). One can recognise an IPT/TIG 9 domain in the interval 1385–1466; it reads PQIIAIFPTH…ITVLVNGLTS (82 aa). IPT/TIG domains follow at residues 1482-1566 and 1569-1637; these read PIVD…RNFF and PQVL…IDVN. Positions 1654–1738 constitute an IPT/TIG 12; atypical domain; sequence PELLSVSRSQ…VLRATVTSVT (85 aa). Residues 1928-2049 enclose the G8 1 domain; sequence HSWFPQRVPH…PEVTVTYLQA (122 aa). 2 PbH1 repeats span residues 2244 to 2266 and 2287 to 2321; these read TWGLKVDSNVFYKIVGHALLLGS and EQGSTIRNNVIISVSAAEGLSGSEMLAPAGIYTFS. N2380 carries an N-linked (GlcNAc...) asparagine glycan. 2 PbH1 repeats span residues 2404–2426 and 2459–2481; these read SNNLHLKNFQVYACRDFGIDILE and RWELTISNTTFVNFDGNCVAIRT. N-linked (GlcNAc...) asparagine glycans are attached at residues N2466, N2503, N2529, N2547, N2581, N2589, N2627, N2747, and N2762. Residues 2741–2867 form the G8 2 domain; it reads KGWGGYNHTI…PKKSWVHLGA (127 aa). PbH1 repeat units lie at residues 3004 to 3026 and 3027 to 3049; these read SAGSWVISSTVHQSCSVGIHASS and SHGVILTDNVVFGTNGHGIDVEG. The N-linked (GlcNAc...) asparagine glycan is linked to N3051. Residues 3080–3102 form a PbH1 7 repeat; the sequence is AEDIILHGNVVAGSERLGFHVGG. Residues N3133 and N3162 are each glycosylated (N-linked (GlcNAc...) asparagine). One copy of the PbH1 8 repeat lies at 3188–3212; the sequence is TVQITLRNSVIVATSSSFDCIHDRK. N3218, N3719, and N3831 each carry an N-linked (GlcNAc...) asparagine glycan. A helical transmembrane segment spans residues 3852 to 3872; sequence IILALSLCSVASWVALSCLVC. The tract at residues 3869–3886 is ciliary targeting sequence (CST); that stretch reads CLVCCWFKKSKTRKIKPE. Residues 3873–4059 are Cytoplasmic-facing; it reads CWFKKSKTRK…LHTAPPETIQ (187 aa). Residues 3885-3898 show a composition bias toward basic and acidic residues; it reads PEDISESQAKEQKK. Residues 3885–3915 are disordered; it reads PEDISESQAKEQKKNTHNSSKPRGLQAKTAK. Residues 3946-3970 are nuclear localization signal (NLS); it reads KRKVSRLAVTEERTTTPAPKIPRIT. The interval 4015–4038 is disordered; it reads QERKQGQEPSQLDKGSDCTGLSQE.

As to quaternary structure, interacts with CAMLG. Interacts with PKD2. Interacts (via CST) with ARF4; this interaction allows an efficient PKHD1 trafficking to the cilium. Interacts (via CST) with RAB8A; this interaction controls trafficking through the endomembrane systeme and to the cilium. Interacts (via CST) with TULP3; this interaction allows PKHD1 trafficking to the cilium. In terms of processing, palmitoylated. Palmitoylation facilitates the trafficking to the cilia and membrane targeting. N-glycosylated. Post-translationally, several proteolytic cleavages occur within the extracellular domain, whereas at least one cleavage occurs within the cytoplasmic domain. Cleaved by a probable proprotein convertase which produces an extracellular domain (polyductin extracellular domain, (PECD)) and a C-terminal fragment (polyductin transmembrane fragment (PTM)) which are tethered together by disulfide bonds. This extracellular domain (PECD) is then shed from the primary cilium by activation of a member of the ADAM metalloproteinase disintegrins family, resulting in concomitant release of an intra-cellular C-terminal fragment (ICD) via a gamma-secretase-dependent process. The proteolytic cleavage of the C-terminal intracellular fragment (ICD) is controlled by cytosolic calcium concentration and activation of PKC. In terms of tissue distribution, expressed in bile ducts and distal nephron segments but is absent from the proximal tubule. Expressed in pancreas and kidney but also in the liver. Expressed primarily in the distal tubule and thick ascending limb of the loop of Henle, and at low-level in the proximal tubule before renal development is complete at P0.

It is found in the cell membrane. Its subcellular location is the cytoplasm. It localises to the apical cell membrane. The protein localises to the cytoskeleton. The protein resides in the cilium basal body. It is found in the cell projection. Its subcellular location is the cilium. It localises to the spindle. The protein localises to the chromosome. The protein resides in the centromere. It is found in the nucleus. Its subcellular location is the secreted. It localises to the extracellular exosome. The protein localises to the endoplasmic reticulum. The protein resides in the golgi apparatus. Promotes ciliogenesis in renal epithelial cells and therefore participates in the tubules formation and/or ensures the maintenance of the architecture of the lumen of the kidney. Has an impact on cellular symmetry by ensuring correct bipolar cell division through the regulation of centrosome duplication and mitotic spindle assembly and by maintaining oriented cell division (OCD) during tubular elongation through planar cell polarity (PCP) pathway. During epithelial cell morphogenesis, it also regulates cell-cell and cell-matrix adhesion and participates in cell motility. Promotes cell-cell contact through the positive regulation of PTK2 kinase activity leading to either positive regulation of epithelial cell proliferation through the HRAS/RAF1 pathways, or negative regulation of apoptosis through the PDK1/AKT1 pathway. May act in collecting-duct and biliary differentiation. May participate in the regulation of the cholangiocytes proliferation and the CCN2 production in an CXCL8-dependent manner. The chain is Fibrocystin from Mus musculus (Mouse).